Reading from the N-terminus, the 467-residue chain is Putative sulfoquinovose importer (467 aa).

The next 12 helical transmembrane spans lie at 17–37 (IAYG…TLYL), 54–74 (IIFL…GFLL), 88–108 (PFIL…FIAT), 121–141 (ALFM…GAMI), 160–180 (GGAT…QSLF), 185–205 (VGYA…MMLC), 238–258 (LLVL…KLAI), 275–295 (WMGF…PLTV), 303–323 (VYLA…FWGS), 325–345 (SFTF…VNSL), 379–399 (ISAA…GYVP), and 414–434 (LIFI…GFFY).

The protein belongs to the sodium:galactoside symporter (TC 2.A.2) family.

The protein resides in the cell inner membrane. In terms of biological role, could be involved in sulfoquinovose import. The chain is Putative sulfoquinovose importer (yihO) from Escherichia coli (strain K12).